An 82-amino-acid chain; its full sequence is Small ribosomal subunit protein bS20 (82 aa).

Over residues 1 to 11 the composition is skewed to basic residues; it reads MANHKSALKRI. The disordered stretch occupies residues 1–20; that stretch reads MANHKSALKRIRSNETKRLR.

The protein belongs to the bacterial ribosomal protein bS20 family.

In terms of biological role, binds directly to 16S ribosomal RNA. The sequence is that of Small ribosomal subunit protein bS20 from Christiangramia forsetii (strain DSM 17595 / CGMCC 1.15422 / KT0803) (Gramella forsetii).